The chain runs to 272 residues: Dermonecrotic toxin LspaSicTox-alphaII1 (272 aa).

His-5 is a catalytic residue. Mg(2+)-binding residues include Glu-25 and Asp-27. The active-site Nucleophile is His-41. Intrachain disulfides connect Cys-45/Cys-51 and Cys-47/Cys-190. Residue Asp-85 participates in Mg(2+) binding.

Belongs to the arthropod phospholipase D family. Class II subfamily. Mg(2+) is required as a cofactor. As to expression, expressed by the venom gland.

The protein localises to the secreted. The catalysed reaction is an N-(acyl)-sphingosylphosphocholine = an N-(acyl)-sphingosyl-1,3-cyclic phosphate + choline. The enzyme catalyses an N-(acyl)-sphingosylphosphoethanolamine = an N-(acyl)-sphingosyl-1,3-cyclic phosphate + ethanolamine. It carries out the reaction a 1-acyl-sn-glycero-3-phosphocholine = a 1-acyl-sn-glycero-2,3-cyclic phosphate + choline. It catalyses the reaction a 1-acyl-sn-glycero-3-phosphoethanolamine = a 1-acyl-sn-glycero-2,3-cyclic phosphate + ethanolamine. Dermonecrotic toxins cleave the phosphodiester linkage between the phosphate and headgroup of certain phospholipids (sphingolipid and lysolipid substrates), forming an alcohol (often choline) and a cyclic phosphate. This toxin acts on sphingomyelin (SM). It may also act on ceramide phosphoethanolamine (CPE), lysophosphatidylcholine (LPC) and lysophosphatidylethanolamine (LPE), but not on lysophosphatidylserine (LPS), and lysophosphatidylglycerol (LPG). It acts by transphosphatidylation, releasing exclusively cyclic phosphate products as second products. Induces dermonecrosis, hemolysis, increased vascular permeability, edema, inflammatory response, and platelet aggregation. In Loxosceles spadicea (Recluse spider), this protein is Dermonecrotic toxin LspaSicTox-alphaII1.